A 372-amino-acid polypeptide reads, in one-letter code: NAD(P)H-quinone oxidoreductase subunit 1 (372 aa).

Helical transmembrane passes span 27-47 (IIWL…GVLV), 97-117 (ILFT…WLIV), 128-148 (VGIG…GLLM), 176-196 (LALS…IDIV), 204-224 (ILSW…ICAL), 266-286 (ILSA…PVPV), 308-328 (SIGI…AILL), and 347-367 (FLLP…LAFP).

This sequence belongs to the complex I subunit 1 family. As to quaternary structure, NDH-1 is composed of at least 11 different subunits.

It localises to the cellular thylakoid membrane. The enzyme catalyses a plastoquinone + NADH + (n+1) H(+)(in) = a plastoquinol + NAD(+) + n H(+)(out). It carries out the reaction a plastoquinone + NADPH + (n+1) H(+)(in) = a plastoquinol + NADP(+) + n H(+)(out). NDH-1 shuttles electrons from an unknown electron donor, via FMN and iron-sulfur (Fe-S) centers, to quinones in the respiratory and/or the photosynthetic chain. The immediate electron acceptor for the enzyme in this species is believed to be plastoquinone. Couples the redox reaction to proton translocation, and thus conserves the redox energy in a proton gradient. The protein is NAD(P)H-quinone oxidoreductase subunit 1 of Prochlorococcus marinus (strain AS9601).